We begin with the raw amino-acid sequence, 158 residues long: uncharacterized protein (158 aa).

Positions 1-26 (MRASRSPPSPRRCHHHHEATGAASGA) are disordered.

This is an uncharacterized protein from Homo sapiens (Human).